Consider the following 159-residue polypeptide: Large ribosomal subunit protein uL30 (159 aa).

This sequence belongs to the universal ribosomal protein uL30 family. Part of the 50S ribosomal subunit.

The protein is Large ribosomal subunit protein uL30 of Aeropyrum pernix (strain ATCC 700893 / DSM 11879 / JCM 9820 / NBRC 100138 / K1).